The following is an 86-amino-acid chain: Toxin Tpa4 (86 aa).

The first 19 residues, 1–19 (MNYFVLIAVACLLTAGTES), serve as a signal peptide directing secretion. In terms of domain architecture, LCN-type CS-alpha/beta spans 21-82 (KDGYPLEYDN…EPIKTSGRCR (62 aa)). 4 disulfides stabilise this stretch: Cys-31-Cys-81, Cys-35-Cys-57, Cys-43-Cys-64, and Cys-47-Cys-66. Pro-83 is modified (proline amide).

Belongs to the long (4 C-C) scorpion toxin superfamily. Sodium channel inhibitor family. Alpha subfamily. In terms of tissue distribution, expressed by the venom gland.

It localises to the secreted. Its function is as follows. Alpha toxins bind voltage-independently at site-3 of sodium channels (Nav) and inhibit the inactivation of the activated channels, thereby blocking neuronal transmission. The protein is Toxin Tpa4 of Tityus pachyurus (Colombian scorpion).